Reading from the N-terminus, the 601-residue chain is MPVKGRIIRVAGPLVVAEGMEGIQMYEMVEVGEERLIGEVNRVVGDKAYIQVYESTTGLKPGEPVYGTGSPLSVELGPGLIGRIYDGIQRPLDVIREVTKSIFVRRGVKVDALDRSRKWHFKPNTTLKPGDKVSGGDVLGEVQETSLITHKVLVPPDVHGRLKWLASEGDYTVEDVIAVVEADGKEIELKMYHRWPVRRARPIIEKLEPVEPLITGMRVIDTMFPMAKGGTGAIPGPFGSGKTVTLQSLAKWSAAKVVIYIGCGERGNEMTEVLETFPKLTDPWTGKPMMERTILIANTSNMPVAAREASIYTGITLAEYYRDMGYDVLLVADSTSRWAEALREIAGRLEEMPAEEGYPSYLASRLAEFYARAGRVKVPGRPERLGSVTIVGAVSPPGGDFTEPVTANTKRFIRVFWALDARLAYSRHYPAINWLVSYSAYVETVAKWWHENISPKWLEYRNEAYEILLREDELREIVRLVGTEGLSEKDKLILEIANIIKTGFLQQNAFDPVDAFATPQKQWKQLETIIDFYHAALEAIKRGVTVKEIREKLAPKIRELILARYNVPNDQLEKLDKLKQELLQALQELIEAKAGRASAAT.

236 to 243 (GPFGSGKT) contacts ATP.

This sequence belongs to the ATPase alpha/beta chains family. Has multiple subunits with at least A(3), B(3), C, D, E, F, H, I and proteolipid K(x).

It is found in the cell membrane. It catalyses the reaction ATP + H2O + 4 H(+)(in) = ADP + phosphate + 5 H(+)(out). In terms of biological role, component of the A-type ATP synthase that produces ATP from ADP in the presence of a proton gradient across the membrane. The A chain is the catalytic subunit. The polypeptide is A-type ATP synthase subunit A (Hyperthermus butylicus (strain DSM 5456 / JCM 9403 / PLM1-5)).